We begin with the raw amino-acid sequence, 235 residues long: uncharacterized protein (235 aa).

Residues 1 to 98 form a disordered region; that stretch reads MDTKLSVTGA…NKKNTLHYSK (98 aa). Residues Lys16 and Lys35 each participate in a glycyl lysine isopeptide (Lys-Gly) (interchain with G-Cter in ubiquitin) cross-link. Residues 38 to 50 show a composition bias toward basic residues; that stretch reads NGNKKRNKNRNRN. Residues 51 to 60 are compositionally biased toward basic and acidic residues; sequence KKTETKEQNE.

This is an uncharacterized protein from Saccharomyces cerevisiae (strain ATCC 204508 / S288c) (Baker's yeast).